The sequence spans 325 residues: Ribosomal RNA small subunit methyltransferase H (325 aa).

Residues 38 to 40 (GGY), aspartate 55, phenylalanine 82, aspartate 103, and glutamine 110 contribute to the S-adenosyl-L-methionine site. 2 disordered regions span residues 256-275 (SGGDAAGSRHRPAPTAAARA) and 281-307 (PARKVRPGKAEEARNPRARSATLRSAV).

Belongs to the methyltransferase superfamily. RsmH family.

Its subcellular location is the cytoplasm. The catalysed reaction is cytidine(1402) in 16S rRNA + S-adenosyl-L-methionine = N(4)-methylcytidine(1402) in 16S rRNA + S-adenosyl-L-homocysteine + H(+). Its function is as follows. Specifically methylates the N4 position of cytidine in position 1402 (C1402) of 16S rRNA. The polypeptide is Ribosomal RNA small subunit methyltransferase H (Sphingopyxis alaskensis (strain DSM 13593 / LMG 18877 / RB2256) (Sphingomonas alaskensis)).